The following is a 284-amino-acid chain: Aliphatic sulfonates import ATP-binding protein SsuB (284 aa).

One can recognise an ABC transporter domain in the interval 21–242 (LRIAHAVKRY…HRGAPAFARL (222 aa)). An ATP-binding site is contributed by 53–60 (GRSGCGKS).

Belongs to the ABC transporter superfamily. Aliphatic sulfonates importer (TC 3.A.1.17.2) family. In terms of assembly, the complex is composed of two ATP-binding proteins (SsuB), two transmembrane proteins (SsuC) and a solute-binding protein (SsuA).

Its subcellular location is the cell inner membrane. It carries out the reaction ATP + H2O + aliphatic sulfonate-[sulfonate-binding protein]Side 1 = ADP + phosphate + aliphatic sulfonateSide 2 + [sulfonate-binding protein]Side 1.. Functionally, part of the ABC transporter complex SsuABC involved in aliphatic sulfonates import. Responsible for energy coupling to the transport system. In Ralstonia nicotianae (strain ATCC BAA-1114 / GMI1000) (Ralstonia solanacearum), this protein is Aliphatic sulfonates import ATP-binding protein SsuB.